A 515-amino-acid polypeptide reads, in one-letter code: 2,3-bisphosphoglycerate-independent phosphoglycerate mutase (515 aa).

Residues D14 and S63 each contribute to the Mn(2+) site. S63 is an active-site residue. Residues H124, R154 to D155, R186, R192, R259 to R262, and K334 each bind substrate. Mn(2+) is bound by residues D401, H405, D442, H443, and H460.

This sequence belongs to the BPG-independent phosphoglycerate mutase family. The cofactor is Mg(2+). Mn(2+) serves as cofactor.

It catalyses the reaction (2R)-2-phosphoglycerate = (2R)-3-phosphoglycerate. The protein operates within carbohydrate degradation; glycolysis; pyruvate from D-glyceraldehyde 3-phosphate: step 3/5. Its activity is regulated as follows. Activity is not affected by 2,3-bisphosphoglycerate. Catalyzes the interconversion of 2-phosphoglycerate and 3-phosphoglycerate. The sequence is that of 2,3-bisphosphoglycerate-independent phosphoglycerate mutase from Brugia malayi (Filarial nematode worm).